We begin with the raw amino-acid sequence, 591 residues long: Alternative cytochrome c oxidase subunit 1 (591 aa).

The helical transmembrane segment at 40–60 (VIAIQYSLTASAIGLVALVLS) threads the bilayer. Position 88 (His-88) interacts with heme b. A run of 11 helical transmembrane segments spans residues 90 to 110 (MIMV…NYLI), 126 to 146 (MLSY…FFVP), 172 to 192 (GIVL…MGGL), 215 to 235 (VWGI…LFVG), 274 to 294 (LFWF…FGIV), 313 to 333 (VWAI…HMYV), 337 to 357 (YPYF…PTAI), 377 to 397 (MLFA…GLFL), 412 to 432 (VVAH…LGAI), 453 to 473 (FWVT…LGLL), and 498 to 518 (FITV…FNLV). 4 residues coordinate Cu cation: His-280, Tyr-284, His-329, and His-330. A cross-link (1'-histidyl-3'-tyrosine (His-Tyr)) is located at residues 280–284 (HPEVY). The heme b site is built by His-415 and His-417.

This sequence belongs to the heme-copper respiratory oxidase family. As to quaternary structure, this alternate cytochrome c oxidase consists of a subunit I and two cytochromes c. Equivalents to subunit 2 and 3 are not present in this complex.

The protein localises to the cell membrane. The catalysed reaction is 4 Fe(II)-[cytochrome c] + O2 + 8 H(+)(in) = 4 Fe(III)-[cytochrome c] + 2 H2O + 4 H(+)(out). Functionally, cytochrome c oxidase is the component of the respiratory chain that catalyzes the reduction of oxygen to water. Subunits 1-3 form the functional core of the enzyme complex. Co I is the catalytic subunit of the enzyme. Electrons originating in cytochrome c are transferred via the copper A center of subunit 2 and a low-spin heme of subunit 1 to the bimetallic center formed by a high-spin heme and copper B. In Bradyrhizobium diazoefficiens (strain JCM 10833 / BCRC 13528 / IAM 13628 / NBRC 14792 / USDA 110), this protein is Alternative cytochrome c oxidase subunit 1 (coxN).